Here is a 576-residue protein sequence, read N- to C-terminus: Adenine deaminase (576 aa).

It belongs to the metallo-dependent hydrolases superfamily. Adenine deaminase family. Mn(2+) is required as a cofactor.

It catalyses the reaction adenine + H2O + H(+) = hypoxanthine + NH4(+). In Bacillus pumilus (strain SAFR-032), this protein is Adenine deaminase.